We begin with the raw amino-acid sequence, 430 residues long: Tol-Pal system protein TolB (430 aa).

The signal sequence occupies residues 1-21; it reads MKQALRVAVSFFMLWAAVLHA.

Belongs to the TolB family. The Tol-Pal system is composed of five core proteins: the inner membrane proteins TolA, TolQ and TolR, the periplasmic protein TolB and the outer membrane protein Pal. They form a network linking the inner and outer membranes and the peptidoglycan layer.

The protein localises to the periplasm. Functionally, part of the Tol-Pal system, which plays a role in outer membrane invagination during cell division and is important for maintaining outer membrane integrity. TolB occupies a key intermediary position in the Tol-Pal system because it communicates directly with both membrane-embedded components, Pal in the outer membrane and TolA in the inner membrane. The polypeptide is Tol-Pal system protein TolB (Enterobacter sp. (strain 638)).